We begin with the raw amino-acid sequence, 523 residues long: Beta-glucosidase 31 (523 aa).

Residues methionine 1–alanine 22 form the signal peptide. Residues glutamine 49, histidine 149, and asparagine 194–glutamate 195 each bind a beta-D-glucoside. The active-site Proton donor is the glutamate 195. Cysteine 214 and cysteine 223 form a disulfide bridge. An N-linked (GlcNAc...) asparagine glycan is attached at asparagine 227. The a beta-D-glucoside site is built by tyrosine 339 and glutamate 413. Glutamate 413 functions as the Nucleophile in the catalytic mechanism. Residue asparagine 450 is glycosylated (N-linked (GlcNAc...) asparagine). Residues tryptophan 460, glutamate 467–tyrosine 468, and phenylalanine 476 each bind a beta-D-glucoside.

It belongs to the glycosyl hydrolase 1 family.

The catalysed reaction is Hydrolysis of terminal, non-reducing beta-D-glucosyl residues with release of beta-D-glucose.. This Oryza sativa subsp. japonica (Rice) protein is Beta-glucosidase 31 (BGLU31).